A 341-amino-acid polypeptide reads, in one-letter code: MLVLGLETSCDETGVALYDSERGLLADALFSQIDLHRVFGGVVPELASRDHVKRMLPLIRQVLDEAGCVATEIDAIAYTAGPGLVGALLVGASCAQALAFAWDIPAIGVHHMEGHLLAPMLEENPPQFPFVALLVSGGHTQLVRVDGIGQYELLGESLDDAAGEAFDKTAKLIGLNYPGGPEIARLAERGVPGRFVFPRPMTDRPGLAFSFSGLKTFALNTWQQCRDAGDDNEQTRCDVSLAFQQAVVETLTIKCKRALKQTGLKRLVIAGGVSANKALRASLEDMLGSIKGNVYYARPQFCTDNGAMIAYAGCQRLLAGQQQDLAISVQARWPMEQLPPL.

Fe cation contacts are provided by His-111 and His-115. Residues 134–138 (LVSGG), Asp-167, Gly-180, and Asn-276 each bind substrate. Asp-304 provides a ligand contact to Fe cation.

Belongs to the KAE1 / TsaD family. It depends on Fe(2+) as a cofactor.

The protein resides in the cytoplasm. The catalysed reaction is L-threonylcarbamoyladenylate + adenosine(37) in tRNA = N(6)-L-threonylcarbamoyladenosine(37) in tRNA + AMP + H(+). Required for the formation of a threonylcarbamoyl group on adenosine at position 37 (t(6)A37) in tRNAs that read codons beginning with adenine. Is involved in the transfer of the threonylcarbamoyl moiety of threonylcarbamoyl-AMP (TC-AMP) to the N6 group of A37, together with TsaE and TsaB. TsaD likely plays a direct catalytic role in this reaction. The sequence is that of tRNA N6-adenosine threonylcarbamoyltransferase from Pseudomonas putida (strain W619).